The primary structure comprises 131 residues: MSMSDPIADLLTRIRNAQMVSKATVSVPSSKVKIAIAQVLKDEGYIDGFEVKSEGNKSELEISLKYYAGRPVIERIERVSRPGLRVYKGRDSIPQVMNGLGVAIVTTPKGVMTDRKARATGVGGEVLCYVA.

The protein belongs to the universal ribosomal protein uS8 family. In terms of assembly, part of the 30S ribosomal subunit. Contacts proteins S5 and S12.

In terms of biological role, one of the primary rRNA binding proteins, it binds directly to 16S rRNA central domain where it helps coordinate assembly of the platform of the 30S subunit. The sequence is that of Small ribosomal subunit protein uS8 from Paracidovorax citrulli (strain AAC00-1) (Acidovorax citrulli).